We begin with the raw amino-acid sequence, 361 residues long: Phospho-N-acetylmuramoyl-pentapeptide-transferase (361 aa).

10 consecutive transmembrane segments (helical) span residues glycine 27 to leucine 47, threonine 72 to alanine 92, valine 99 to leucine 119, leucine 135 to alanine 155, alanine 169 to glycine 189, glycine 200 to valine 220, leucine 240 to proline 260, isoleucine 264 to alanine 284, isoleucine 289 to valine 309, and glutamine 338 to leucine 358.

Belongs to the glycosyltransferase 4 family. MraY subfamily. Mg(2+) serves as cofactor.

The protein localises to the cell inner membrane. The enzyme catalyses UDP-N-acetyl-alpha-D-muramoyl-L-alanyl-gamma-D-glutamyl-meso-2,6-diaminopimeloyl-D-alanyl-D-alanine + di-trans,octa-cis-undecaprenyl phosphate = di-trans,octa-cis-undecaprenyl diphospho-N-acetyl-alpha-D-muramoyl-L-alanyl-D-glutamyl-meso-2,6-diaminopimeloyl-D-alanyl-D-alanine + UMP. Its pathway is cell wall biogenesis; peptidoglycan biosynthesis. Catalyzes the initial step of the lipid cycle reactions in the biosynthesis of the cell wall peptidoglycan: transfers peptidoglycan precursor phospho-MurNAc-pentapeptide from UDP-MurNAc-pentapeptide onto the lipid carrier undecaprenyl phosphate, yielding undecaprenyl-pyrophosphoryl-MurNAc-pentapeptide, known as lipid I. This is Phospho-N-acetylmuramoyl-pentapeptide-transferase from Methylobacterium radiotolerans (strain ATCC 27329 / DSM 1819 / JCM 2831 / NBRC 15690 / NCIMB 10815 / 0-1).